The sequence spans 123 residues: Small ribosomal subunit protein uS12 (123 aa).

3-methylthioaspartic acid is present on aspartate 89.

Belongs to the universal ribosomal protein uS12 family. In terms of assembly, part of the 30S ribosomal subunit. Contacts proteins S8 and S17. May interact with IF1 in the 30S initiation complex.

With S4 and S5 plays an important role in translational accuracy. Functionally, interacts with and stabilizes bases of the 16S rRNA that are involved in tRNA selection in the A site and with the mRNA backbone. Located at the interface of the 30S and 50S subunits, it traverses the body of the 30S subunit contacting proteins on the other side and probably holding the rRNA structure together. The combined cluster of proteins S8, S12 and S17 appears to hold together the shoulder and platform of the 30S subunit. This is Small ribosomal subunit protein uS12 from Phenylobacterium zucineum (strain HLK1).